A 364-amino-acid chain; its full sequence is Alpha-2-HS-glycoprotein (364 aa).

The or 17 signal peptide spans 1 to 15 (MKSFLLLFCLAQLCS). The Cystatin fetuin-A-type 1 domain maps to 27–133 (YKEPACDDPD…QFSVLFTKCD (107 aa)). 6 disulfides stabilise this stretch: C32–C355, C89–C100, C114–C132, C146–C149, C208–C219, and C230–C248. N99 carries an N-linked (GlcNAc...) asparagine glycan. 3 positions are modified to phosphoserine: S134, S135, and S138. Residues 144–256 (KLCPDCPLLA…TCTLFQTQPV (113 aa)) enclose the Cystatin fetuin-A-type 2 domain. Residues N156 and N176 are each glycosylated (N-linked (GlcNAc...) asparagine). S301 carries an O-linked (GalNAc...) serine glycan. A Phosphothreonine modification is found at T319. A phosphoserine mark is found at S321, S325, S328, and S330. An O-linked (GalNAc...) threonine glycan is attached at T339.

It belongs to the fetuin family. Post-translationally, phosphorylated by FAM20C in the extracellular medium.

It localises to the secreted. The protein is Alpha-2-HS-glycoprotein (AHSG) of Ovis aries (Sheep).